The sequence spans 280 residues: Large ribosomal subunit protein uL2 (280 aa).

Disordered regions lie at residues 1-25 and 230-280; these read MGIR…AEVT and HPHG…SGRG. A compositionally biased stretch (basic residues) spans 257–280; the sequence is KTRKRRKPSSKFIIRRRKTASGRG.

This sequence belongs to the universal ribosomal protein uL2 family. In terms of assembly, part of the 50S ribosomal subunit. Forms a bridge to the 30S subunit in the 70S ribosome.

Its function is as follows. One of the primary rRNA binding proteins. Required for association of the 30S and 50S subunits to form the 70S ribosome, for tRNA binding and peptide bond formation. It has been suggested to have peptidyltransferase activity; this is somewhat controversial. Makes several contacts with the 16S rRNA in the 70S ribosome. This is Large ribosomal subunit protein uL2 from Gloeobacter violaceus (strain ATCC 29082 / PCC 7421).